A 439-amino-acid chain; its full sequence is Dihydroorotase (439 aa).

Zn(2+) is bound by residues H65 and H67. Substrate contacts are provided by residues 67 to 69 and N99; that span reads HFR. Residues D156, H183, H246, and D321 each coordinate Zn(2+). D321 is a catalytic residue. Residues H325 and 339 to 340 each bind substrate; that span reads FG.

This sequence belongs to the metallo-dependent hydrolases superfamily. DHOase family. Class I DHOase subfamily. Zn(2+) serves as cofactor.

The catalysed reaction is (S)-dihydroorotate + H2O = N-carbamoyl-L-aspartate + H(+). Its pathway is pyrimidine metabolism; UMP biosynthesis via de novo pathway; (S)-dihydroorotate from bicarbonate: step 3/3. Its function is as follows. Catalyzes the reversible cyclization of carbamoyl aspartate to dihydroorotate. The sequence is that of Dihydroorotase from Chlorobaculum tepidum (strain ATCC 49652 / DSM 12025 / NBRC 103806 / TLS) (Chlorobium tepidum).